The following is a 660-amino-acid chain: DNA ligase (660 aa).

NAD(+) contacts are provided by residues 31–35 (DKEYD), 79–80 (SL), and Glu-111. The active-site N6-AMP-lysine intermediate is the Lys-113. The NAD(+) site is built by Arg-134, Glu-168, Lys-280, and Lys-304. Positions 397, 400, 413, and 419 each coordinate Zn(2+). Residues 577–660 (RQESIFSGKT…LDEAAFEALL (84 aa)) enclose the BRCT domain.

It belongs to the NAD-dependent DNA ligase family. LigA subfamily. Mg(2+) is required as a cofactor. It depends on Mn(2+) as a cofactor.

The catalysed reaction is NAD(+) + (deoxyribonucleotide)n-3'-hydroxyl + 5'-phospho-(deoxyribonucleotide)m = (deoxyribonucleotide)n+m + AMP + beta-nicotinamide D-nucleotide.. Functionally, DNA ligase that catalyzes the formation of phosphodiester linkages between 5'-phosphoryl and 3'-hydroxyl groups in double-stranded DNA using NAD as a coenzyme and as the energy source for the reaction. It is essential for DNA replication and repair of damaged DNA. This is DNA ligase from Alkaliphilus metalliredigens (strain QYMF).